A 90-amino-acid chain; its full sequence is RNA-binding protein Hfq (90 aa).

The Sm domain occupies 9–68 (DPFLNALRRERVPVSIYLVNGIKLQGQVESFDQFVILLKNTVSQMVYKHAISTVVPARPF).

Belongs to the Hfq family. As to quaternary structure, homohexamer.

RNA chaperone that binds small regulatory RNA (sRNAs) and mRNAs to facilitate mRNA translational regulation in response to envelope stress, environmental stress and changes in metabolite concentrations. Also binds with high specificity to tRNAs. In Shewanella oneidensis (strain ATCC 700550 / JCM 31522 / CIP 106686 / LMG 19005 / NCIMB 14063 / MR-1), this protein is RNA-binding protein Hfq.